The chain runs to 284 residues: Xyloglucan endotransglucosylase/hydrolase protein 22 (284 aa).

An N-terminal signal peptide occupies residues 1–21 (MAITYLLPLFLSLIITSSVSA). A GH16 domain is found at 22–211 (NFQRDVEITW…WSKAPFTASY (190 aa)). Glu-97 acts as the Nucleophile in catalysis. The Proton donor role is filled by Glu-101. Residue Glu-101 coordinates xyloglucan. Asn-105 carries an N-linked (GlcNAc...) asparagine glycan. Xyloglucan-binding positions include 114–116 (HTN), 124–126 (DKE), 190–191 (DW), and Gly-195. A disulfide bridge connects residues Cys-219 and Cys-228. Asn-230 carries N-linked (GlcNAc...) asparagine glycosylation. Cys-267 and Cys-281 form a disulfide bridge. Arg-272 is a binding site for xyloglucan.

The protein belongs to the glycosyl hydrolase 16 family. XTH group 2 subfamily. Contains at least one intrachain disulfide bond essential for its enzymatic activity. In terms of processing, N-glycosylated; essential for its enzymatic activity. Highly expressed. Predominantly expressed in green siliques. Expressed in young expanding leaves, trichomes, lateral root primordia, vascular tissue, abscission zones and elongating hypocols. Following wind stimulation, it decreases in the leaves of wind-stimulated plants, while it strongly increases in sites around cells of the pith parenchyma, between the vascular elements, and within the epidermis.

It localises to the secreted. The protein localises to the cell wall. It is found in the extracellular space. The protein resides in the apoplast. The catalysed reaction is breaks a beta-(1-&gt;4) bond in the backbone of a xyloglucan and transfers the xyloglucanyl segment on to O-4 of the non-reducing terminal glucose residue of an acceptor, which can be a xyloglucan or an oligosaccharide of xyloglucan.. Functionally, catalyzes xyloglucan endohydrolysis (XEH) and/or endotransglycosylation (XET). Cleaves and religates xyloglucan polymers, an essential constituent of the primary cell wall, and thereby participates in cell wall construction of growing tissues. Its induction in case of mechanical stress, suggests that it may contribute in the adaptive changes in morphogenesis by being recruited to alter tissues tensil strength, or flexibility, enabling adaptation to mechanically stressful environments. This is Xyloglucan endotransglucosylase/hydrolase protein 22 (XTH22) from Arabidopsis thaliana (Mouse-ear cress).